A 103-amino-acid polypeptide reads, in one-letter code: MQNQRIRIRLKAFDHRLIDQSTSEIVETAKRTGAQVRGPIPLPTRKEKFTILVSPHVDKDARDQYEIRTHKRLVDIVKPTEKTVDALMRLDLASGVDVQISLG.

Belongs to the universal ribosomal protein uS10 family. Part of the 30S ribosomal subunit.

Involved in the binding of tRNA to the ribosomes. The chain is Small ribosomal subunit protein uS10 from Wigglesworthia glossinidia brevipalpis.